A 101-amino-acid chain; its full sequence is Small ribosomal subunit protein uS14 (101 aa).

The protein belongs to the universal ribosomal protein uS14 family. As to quaternary structure, part of the 30S ribosomal subunit. Contacts proteins S3 and S10.

Functionally, binds 16S rRNA, required for the assembly of 30S particles and may also be responsible for determining the conformation of the 16S rRNA at the A site. The protein is Small ribosomal subunit protein uS14 of Chlamydia abortus (strain DSM 27085 / S26/3) (Chlamydophila abortus).